The chain runs to 153 residues: Transcriptional repressor NrdR (153 aa).

A zinc finger lies at 3–34; the sequence is CPFCNSTDTQVKDSRSIENDMLIRRRRVCLVC. Residues 49 to 139 enclose the ATP-cone domain; it reads FMVVKKNGET…VYMNFRNIND (91 aa).

Belongs to the NrdR family. Requires Zn(2+) as cofactor.

Functionally, negatively regulates transcription of bacterial ribonucleotide reductase nrd genes and operons by binding to NrdR-boxes. The polypeptide is Transcriptional repressor NrdR (Ehrlichia chaffeensis (strain ATCC CRL-10679 / Arkansas)).